Reading from the N-terminus, the 239-residue chain is DnaA regulatory inactivator Hda (239 aa).

Belongs to the DnaA family. HdA subfamily. The active form seems to be an ADP-bound monomer. Forms the RIDA complex (regulatory inactivation of DnaA) of ATP-DnaA, ADP-Hda and the DNA-loaded beta sliding clamp (dnaN).

Its function is as follows. Mediates the interaction of DNA replication initiator protein DnaA with DNA polymerase subunit beta sliding clamp (dnaN). Stimulates hydrolysis of ATP-DnaA to ADP-DnaA, rendering DnaA inactive for reinitiation, a process called regulatory inhibition of DnaA or RIDA. The chain is DnaA regulatory inactivator Hda from Yersinia enterocolitica serotype O:8 / biotype 1B (strain NCTC 13174 / 8081).